A 346-amino-acid chain; its full sequence is Ornithine carbamoyltransferase, catabolic (346 aa).

Carbamoyl phosphate is bound by residues 58–61, asparagine 85, arginine 109, and 136–139; these read STRT and HPTQ. Residues asparagine 168, aspartate 239, and 243–244 contribute to the L-ornithine site; that span reads SL. Residues 280–281 and arginine 332 contribute to the carbamoyl phosphate site; that span reads CL.

Belongs to the aspartate/ornithine carbamoyltransferase superfamily. OTCase family.

It localises to the cytoplasm. The catalysed reaction is carbamoyl phosphate + L-ornithine = L-citrulline + phosphate + H(+). The protein operates within amino-acid degradation; L-arginine degradation via ADI pathway; carbamoyl phosphate from L-arginine: step 2/2. Reversibly catalyzes the transfer of the carbamoyl group from carbamoyl phosphate (CP) to the N(epsilon) atom of ornithine (ORN) to produce L-citrulline. The polypeptide is Ornithine carbamoyltransferase, catabolic (Mycoplasma pneumoniae (strain ATCC 29342 / M129 / Subtype 1) (Mycoplasmoides pneumoniae)).